A 198-amino-acid chain; its full sequence is Photosystem I assembly protein Ycf4 (198 aa).

Positions Met-1–Ser-20 are disordered. Helical transmembrane passes span Trp-38–Leu-58 and Leu-78–Ile-98.

This sequence belongs to the Ycf4 family.

The protein resides in the cellular thylakoid membrane. In terms of biological role, seems to be required for the assembly of the photosystem I complex. This Trichormus variabilis (strain ATCC 29413 / PCC 7937) (Anabaena variabilis) protein is Photosystem I assembly protein Ycf4.